A 47-amino-acid polypeptide reads, in one-letter code: Large ribosomal subunit protein eL40 (47 aa).

This sequence belongs to the eukaryotic ribosomal protein eL40 family.

This is Large ribosomal subunit protein eL40 from Methanococcus aeolicus (strain ATCC BAA-1280 / DSM 17508 / OCM 812 / Nankai-3).